A 185-amino-acid polypeptide reads, in one-letter code: Ribosome-recycling factor (185 aa).

The protein belongs to the RRF family.

The protein localises to the cytoplasm. Responsible for the release of ribosomes from messenger RNA at the termination of protein biosynthesis. May increase the efficiency of translation by recycling ribosomes from one round of translation to another. This Mannheimia succiniciproducens (strain KCTC 0769BP / MBEL55E) protein is Ribosome-recycling factor.